Consider the following 519-residue polypeptide: Transmembrane protein 180 (519 aa).

Topologically, residues 1–11 are extracellular; the sequence is MGLDWPQAWLL. The chain crosses the membrane as a helical span at residues 12–43; sequence GLPIAVVYGSLALFTSILHNVFLLYYVDTFVS. At 44–55 the chain is on the cytoplasmic side; the sequence is VYKINKVSFWVG. A helical membrane pass occupies residues 56–74; it reads ETVFLLWNSFNDPLFGWLS. The Extracellular segment spans residues 75–100; it reads DRQLLSSQPRSGAGLSSRDVVLTRVR. A helical membrane pass occupies residues 101-118; that stretch reads ALGWHGPLLALSFLAFWV. The Cytoplasmic portion of the chain corresponds to 119–126; that stretch reads PWAPAGLQ. A helical membrane pass occupies residues 127 to 151; that stretch reads FLLCLCLYDGFLTLVDLHHHALLAD. Over 152–155 the chain is Extracellular; it reads LALS. A helical transmembrane segment spans residues 156-179; it reads SHDRTHLNFYCSLFSAAGSLSVFA. At 180-191 the chain is on the cytoplasmic side; sequence SYAFWNKEDFSS. The chain crosses the membrane as a helical span at residues 192-223; the sequence is FRAFCVVLAAGSGLGFLGTTQLLKRQIEATRR. The Extracellular segment spans residues 224-264; sequence DRGCPGLDLDGGVCEEEPPVGGEEAGNITLGQYLRQLARHQ. N-linked (GlcNAc...) asparagine glycosylation occurs at Asn250. The helical transmembrane segment at 265–292 threads the bilayer; the sequence is NFLWFVGMDLVQVFHCHFNSNFFPLFLE. At 293-305 the chain is on the cytoplasmic side; the sequence is HLLSDHISLSTGS. The helical transmembrane segment at 306–325 threads the bilayer; sequence FLLGISYVAPHLNNLYFLPL. At 326-330 the chain is on the extracellular side; it reads CRRWG. Residues 331 to 350 traverse the membrane as a helical segment; that stretch reads VYAVVRGLFLLKLSLSLLML. At 351-358 the chain is on the cytoplasmic side; that stretch reads LAGPDHPG. A helical membrane pass occupies residues 359 to 393; that stretch reads LLCFFIASNRVFTEGTCKLLTLVVTDLVDEDLVLN. The Extracellular segment spans residues 394–402; that stretch reads HRKQAASAL. A helical membrane pass occupies residues 403 to 429; sequence LFGMVALVTKPGQTFAPLLGTWLLCFY. At 430–468 the chain is on the cytoplasmic side; sequence TGHDLFQQSPMTPVGSVRPWPELPAPAPAPAQAPTLRQG. A helical membrane pass occupies residues 469 to 487; that stretch reads CFYLLVFVPITCALLQLFT. Residues 488–519 lie on the Extracellular side of the membrane; that stretch reads WSQFTLHGRRLRTVKAQRQNLAQIHTLNIKMV.

Its subcellular location is the cell membrane. This Mus musculus (Mouse) protein is Transmembrane protein 180.